Consider the following 534-residue polypeptide: Probable cytochrome c oxidase subunit 1 (534 aa).

8 consecutive transmembrane segments (helical) span residues 35–55 (IMYI…SLLF), 76–96 (VLIT…ALFS), 97–117 (GFGN…FPRL), 120–140 (ISFW…FIDG), 165–185 (VAIF…INLI), 202–222 (PLFV…MPVL), 254–274 (LFWF…FGIV), and 286–306 (IFGY…GFIV). Fe(II)-heme a is bound at residue H81. 2 residues coordinate Cu cation: H260 and Y264. The 1'-histidyl-3'-tyrosine (His-Tyr) cross-link spans 260-264 (HPEVY). Residues H309 and H310 each contribute to the Cu cation site. Transmembrane regions (helical) follow at residues 320–340 (ALIY…IKIF) and 357–377 (MLFA…GIIL). H395 serves as a coordination point for heme a3. Transmembrane regions (helical) follow at residues 396-416 (FHYT…YYWF), 433-453 (FWIT…LGLA), and 475-495 (IGAG…FYTL). Residue H397 participates in Fe(II)-heme a binding.

It belongs to the heme-copper respiratory oxidase family.

It is found in the cell membrane. It carries out the reaction 4 Fe(II)-[cytochrome c] + O2 + 8 H(+)(in) = 4 Fe(III)-[cytochrome c] + 2 H2O + 4 H(+)(out). It functions in the pathway energy metabolism; oxidative phosphorylation. Its function is as follows. Cytochrome c oxidase is the component of the respiratory chain that catalyzes the reduction of oxygen to water. Subunits 1-3 form the functional core of the enzyme complex. CO I is the catalytic subunit of the enzyme. Electrons originating in cytochrome c are transferred via the copper A center of subunit 2 and heme A of subunit 1 to the bimetallic center formed by heme A3 and copper B. This chain is Probable cytochrome c oxidase subunit 1 (ctaD), found in Rickettsia prowazekii (strain Madrid E).